The primary structure comprises 446 residues: Dihydroorotate dehydrogenase (quinone), mitochondrial (446 aa).

Residues 1–13 constitute a mitochondrion transit peptide; the sequence is MHSRPLPTLGRHA. The chain crosses the membrane as a helical span at residues 40–57; it reads AILYTAGILGGAFAGYYL. FMN is bound by residues 125–129 and Ser149; that span reads AGLDK. Substrate is bound at residue Lys129. Position 174–178 (174–178) interacts with substrate; it reads NRYGF. Asn222 and Asn252 together coordinate FMN. Substrate-binding positions include Asn252 and 252–257; that span reads NVSSPN. Ser255 (nucleophile) is an active-site residue. Positions 303 and 331 each coordinate FMN. 332–333 is a substrate binding site; sequence NT. FMN is bound by residues Gly357, Gly387, and 408-409; that span reads YT.

This sequence belongs to the dihydroorotate dehydrogenase family. Type 2 subfamily. The cofactor is FMN.

The protein resides in the mitochondrion inner membrane. It carries out the reaction (S)-dihydroorotate + a quinone = orotate + a quinol. Its pathway is pyrimidine metabolism; UMP biosynthesis via de novo pathway; orotate from (S)-dihydroorotate (quinone route): step 1/1. Its activity is regulated as follows. The activity is dependent of the presence of oxygen. Functionally, catalyzes the conversion of dihydroorotate to orotate with quinone as electron acceptor. This is Dihydroorotate dehydrogenase (quinone), mitochondrial (URA9) from Lachancea kluyveri (strain ATCC 58438 / CBS 3082 / BCRC 21498 / NBRC 1685 / JCM 7257 / NCYC 543 / NRRL Y-12651) (Yeast).